A 353-amino-acid chain; its full sequence is Protein pelota homolog (353 aa).

Belongs to the eukaryotic release factor 1 family. Pelota subfamily. As to quaternary structure, monomer. Requires a divalent metal cation as cofactor.

It is found in the cytoplasm. Functionally, may function in recognizing stalled ribosomes, interact with stem-loop structures in stalled mRNA molecules, and effect endonucleolytic cleavage of the mRNA. May play a role in the release non-functional ribosomes and degradation of damaged mRNAs. Has endoribonuclease activity. This chain is Protein pelota homolog, found in Methanothermobacter thermautotrophicus (strain ATCC 29096 / DSM 1053 / JCM 10044 / NBRC 100330 / Delta H) (Methanobacterium thermoautotrophicum).